The following is a 799-amino-acid chain: LPS-assembly protein LptD (799 aa).

The first 34 residues, 1-34 (MMHELDLRPHLARFAQRPLALLAWALLQGTSVNA), serve as a signal peptide directing secretion.

The protein belongs to the LptD family. Component of the lipopolysaccharide transport and assembly complex. Interacts with LptE and LptA.

It localises to the cell outer membrane. Together with LptE, is involved in the assembly of lipopolysaccharide (LPS) at the surface of the outer membrane. In Albidiferax ferrireducens (strain ATCC BAA-621 / DSM 15236 / T118) (Rhodoferax ferrireducens), this protein is LPS-assembly protein LptD.